A 407-amino-acid chain; its full sequence is tRNA (guanine-N(7)-)-methyltransferase non-catalytic subunit wuho (407 aa).

WD repeat units lie at residues 83-124, 171-210, and 214-252; these read AIEV…ARLL, GHLS…DIHS, and GHKE…ELLI.

The protein belongs to the WD repeat TRM82 family. Forms a heterodimer with the catalytic subunit Mettl1. Interacts with mei-P26 and weakly interacts with bgcn; required for the function or formation of the mei-P26-bgcn-bam-sxl complex. Interacts with nanos; may be involved in mei-P26-dependent derepression of the BMP signaling pathway. Interacts with Myc; the interaction may be mediated by mei-P26 and may be involved in the regulation of ribosome biogenesis. In testis, it is present at high level in hub cells, a niche for germline stem cells of testis. Ubiquitously expressed in all testicular cells throughout spermatogenesis. Ubiquitously expressed in all germline and somatic cells of the ovary.

It is found in the nucleus. The protein resides in the cytoplasm. It functions in the pathway tRNA modification; N(7)-methylguanine-tRNA biosynthesis. In terms of biological role, required for the Mettl1-dependent formation of N(7)-methylguanine at position 46 (m7G46) in tRNA. In the Mettl1-wuho methyltransferase complex, it is required to stabilize and induce conformational changes of the catalytic subunit. Required for binding of nanos mRNA and repression of translation by the mei-P26-bgcn-bam-sxl complex. May cooperate with mei-P26 and nanos to derepress the BMP signaling pathway. May cooperate with mei-P26 to suppress expression of a subset of microRNAs. May cooperate with mei-P26 to regulate bam expression levels in germline cells during gametogenesis. Required to promote mitosis to meiosis transition during gametogenesis. May regulate germline cell division in part by regulating ribosome biogenesis. This is tRNA (guanine-N(7)-)-methyltransferase non-catalytic subunit wuho from Drosophila ananassae (Fruit fly).